The following is a 147-amino-acid chain: Ribosome maturation factor RimP (147 aa).

This sequence belongs to the RimP family.

The protein resides in the cytoplasm. Its function is as follows. Required for maturation of 30S ribosomal subunits. The polypeptide is Ribosome maturation factor RimP (Legionella pneumophila (strain Lens)).